A 1006-amino-acid polypeptide reads, in one-letter code: Beta-galactosidase (1006 aa).

The N-terminal stretch at 1 to 19 (MKLSSACAIALLAAQAAGA) is a signal peptide. A glycan (N-linked (GlcNAc...) asparagine) is linked at asparagine 156. Glutamate 200 acts as the Proton donor in catalysis. The active-site Nucleophile is the glutamate 298. Asparagine 373, asparagine 402, asparagine 422, asparagine 478, asparagine 522, asparagine 622, asparagine 739, asparagine 760, asparagine 777, and asparagine 805 each carry an N-linked (GlcNAc...) asparagine glycan.

It belongs to the glycosyl hydrolase 35 family.

It carries out the reaction Hydrolysis of terminal non-reducing beta-D-galactose residues in beta-D-galactosides.. In terms of biological role, cleaves beta-linked terminal galactosyl residues from gangliosides, glycoproteins, and glycosaminoglycans. This Aspergillus niger protein is Beta-galactosidase (lacA).